We begin with the raw amino-acid sequence, 423 residues long: D-tagatose-1,6-bisphosphate aldolase subunit GatZ (423 aa).

Belongs to the GatZ/KbaZ family. GatZ subfamily. As to quaternary structure, forms a complex with GatY.

It functions in the pathway carbohydrate metabolism; D-tagatose 6-phosphate degradation; D-glyceraldehyde 3-phosphate and glycerone phosphate from D-tagatose 6-phosphate: step 2/2. Component of the tagatose-1,6-bisphosphate aldolase GatYZ that is required for full activity and stability of the Y subunit. Could have a chaperone-like function for the proper and stable folding of GatY. When expressed alone, GatZ does not show any aldolase activity. Is involved in the catabolism of galactitol. The polypeptide is D-tagatose-1,6-bisphosphate aldolase subunit GatZ (Salmonella agona (strain SL483)).